The following is a 55-amino-acid chain: Large ribosomal subunit protein bL33 (55 aa).

It belongs to the bacterial ribosomal protein bL33 family.

This chain is Large ribosomal subunit protein bL33, found in Paramagnetospirillum magneticum (strain ATCC 700264 / AMB-1) (Magnetospirillum magneticum).